Reading from the N-terminus, the 400-residue chain is Putative lysosomal acid lipase/cholesteryl ester hydrolase (400 aa).

The first 17 residues, 1–17 (MWRLIIIAILFQGLVNS), serve as a signal peptide directing secretion. 3 N-linked (GlcNAc...) asparagine glycosylation sites follow: Asn34, Asn129, and Asn159. One can recognise an AB hydrolase-1 domain in the interval 78 to 378 (PAVFLQHGLL…EWEHLDFIWG (301 aa)). The Charge relay system role is filled by Ser172. N-linked (GlcNAc...) asparagine glycosylation is present at Asn271. His372 serves as the catalytic Charge relay system.

This sequence belongs to the AB hydrolase superfamily. Lipase family. In terms of tissue distribution, expressed by the venom gland.

Its subcellular location is the secreted. The catalysed reaction is a sterol ester + H2O = a sterol + a fatty acid + H(+). In physiological conditions, is crucial for intracellular hydrolysis of cholesteryl esters and triglycerides that have been internalized via receptor-mediated endocytosis of lipoprotein particles. In venom, the biological contribution is unknown. The sequence is that of Putative lysosomal acid lipase/cholesteryl ester hydrolase from Crotalus adamanteus (Eastern diamondback rattlesnake).